The primary structure comprises 182 residues: Inner membrane assembly complex subunit 17 (182 aa).

The transit peptide at 1–45 directs the protein to the mitochondrion; it reads MLKRRSNALITLSRTKLFPITTVAYYHRRLLNQQRRAVSTSPKKE. Topologically, residues 46-107 are mitochondrial matrix; the sequence is IKSLEDLANL…EIPVKRFIRP (62 aa). The helical transmembrane segment at 108-127 threads the bilayer; the sequence is LWMFILMGSSVYLLLHFSWW. A coiled-coil region spans residues 128–158; the sequence is KLEHEERESQLKKEVEILEHQLNELIVQDKT. Residues 128–182 are Mitochondrial intermembrane-facing; that stretch reads KLEHEERESQLKKEVEILEHQLNELIVQDKTHNTSRGKGSNESTHMKPWYRRWFW.

Belongs to the INA17 family. Component of the inner membrane assembly (INA) complex, composed of INA17 and INA22. Interacts with a subset of F(1)F(0)-ATP synthase subunits of the F(1)-domain and the peripheral stalk.

The protein resides in the mitochondrion inner membrane. Component of the INA complex (INAC) that promotes the biogenesis of mitochondrial F(1)F(0)-ATP synthase. INAC facilitates the assembly of the peripheral stalk and promotes the assembly of the catalytic F(1)-domain with the membrane-embedded F(0)-domain. This chain is Inner membrane assembly complex subunit 17, found in Saccharomyces cerevisiae (strain RM11-1a) (Baker's yeast).